The following is a 137-amino-acid chain: Putative pre-16S rRNA nuclease (137 aa).

It belongs to the YqgF nuclease family.

It is found in the cytoplasm. In terms of biological role, could be a nuclease involved in processing of the 5'-end of pre-16S rRNA. The chain is Putative pre-16S rRNA nuclease from Actinobacillus pleuropneumoniae serotype 7 (strain AP76).